The sequence spans 1238 residues: Virulence sensor protein BvgS (1238 aa).

The first 30 residues, 1–30, serve as a signal peptide directing secretion; the sequence is MPAPHRLYPRSLICLAQALLAWALLAWAPA. At 33-307 the chain is on the cytoplasmic side; sequence SQELTLVGKA…REQQWMANHP (275 aa). A helical transmembrane segment spans residues 308–331; that stretch reads VVKVAVLNLFAPFTLFRTDEQFGG. Residues 332–541 are Periplasmic-facing; that stretch reads ISAAVLQLLQ…PRTWYAYRNE (210 aa). Residues 542–563 form a helical membrane-spanning segment; that stretch reads IYLLIGLGLLSALLFLSWIVYL. Residues 564 to 1238 lie on the Cytoplasmic side of the membrane; sequence RRQIRQRKRA…LEQRPHQGQP (675 aa). The PAS domain maps to 580 to 651; the sequence is QLEFMRVLID…MHEFLLTRMS (72 aa). The 57-residue stretch at 652-708 folds into the PAC domain; sequence AEREPRFEDRDVTLHGRTRHVYQWTVPYGDSLGELKGIIGGWIDITERAELLRELHD. The 223-residue stretch at 726 to 948 folds into the Histidine kinase domain; sequence TMSHEIRTPM…TVSVDLRLTM (223 aa). Histidine 729 carries the post-translational modification Phosphohistidine; by autocatalysis. Positions 974–1095 constitute a Response regulatory domain; it reads RVLVVDDHKP…ALRQRLNEAA (122 aa). Aspartate 1023 bears the 4-aspartylphosphate mark. Residues 1133–1228 form the HPt domain; sequence DEALIRQLLE…AALETQLRAW (96 aa). Histidine 1172 is modified (phosphohistidine).

In terms of processing, activation requires a sequential transfer of a phosphate group from a His in the primary transmitter domain, to an Asp in the receiver domain and to a His in the secondary transmitter domain.

The protein localises to the cell inner membrane. The enzyme catalyses ATP + protein L-histidine = ADP + protein N-phospho-L-histidine.. In terms of biological role, member of the two-component regulatory system BvgS/BvgA. Phosphorylates BvgA via a four-step phosphorelay in response to environmental signals. In Bordetella bronchiseptica (strain ATCC BAA-588 / NCTC 13252 / RB50) (Alcaligenes bronchisepticus), this protein is Virulence sensor protein BvgS (bvgS).